The sequence spans 476 residues: MKVTLPDFRRAGVLVVGDVMLDRYWYGPTCRISPEAPVPVVKVDTIEERPGGAANVAMNIASLGAVARLVGLTGIDDAARALICKLSEVRVRCDFVSVPTHPTITKLRVLSRNQQLIRLDFEEGFDGVDPTPIFERIQLALPQIGALVLSDYAKGALNSVQPMIQLARKANVPVLIDPKGSDFERYRGATLLTPNLSEFEAVVGRCKNEEELVNRGMQLVADFELSALLVTRSEQGMTLLQLGKPPLHLPTQAKEVFDVTGAGDTVIGVLAAALAAGNSLEESCFLANAAAGVVVGKLGTSTVSPIELENAIRGRAETGFGVMDEQQLKIAVAQARQRGEKVVMTNGIFDILHAGHVSYLANARKLGDRLIVAVNSDASTKRLKGEKRPVNPLEQRMVVLGALEAVDWVVPFEEDTPQRLIADILPDLLVKGGDYKPHEIAGSEEVWAAGGEVKVLNFEDGVSTTNIIQSIKNGRG.

The segment at 1-318 (MKVTLPDFRR…ENAIRGRAET (318 aa)) is ribokinase. 195–198 (NLSE) contributes to the ATP binding site. The active site involves Asp264. Positions 344 to 476 (MTNGIFDILH…IIQSIKNGRG (133 aa)) are cytidylyltransferase.

This sequence in the N-terminal section; belongs to the carbohydrate kinase PfkB family. It in the C-terminal section; belongs to the cytidylyltransferase family. In terms of assembly, homodimer.

It catalyses the reaction D-glycero-beta-D-manno-heptose 7-phosphate + ATP = D-glycero-beta-D-manno-heptose 1,7-bisphosphate + ADP + H(+). The catalysed reaction is D-glycero-beta-D-manno-heptose 1-phosphate + ATP + H(+) = ADP-D-glycero-beta-D-manno-heptose + diphosphate. Its pathway is nucleotide-sugar biosynthesis; ADP-L-glycero-beta-D-manno-heptose biosynthesis; ADP-L-glycero-beta-D-manno-heptose from D-glycero-beta-D-manno-heptose 7-phosphate: step 1/4. It functions in the pathway nucleotide-sugar biosynthesis; ADP-L-glycero-beta-D-manno-heptose biosynthesis; ADP-L-glycero-beta-D-manno-heptose from D-glycero-beta-D-manno-heptose 7-phosphate: step 3/4. Catalyzes the phosphorylation of D-glycero-D-manno-heptose 7-phosphate at the C-1 position to selectively form D-glycero-beta-D-manno-heptose-1,7-bisphosphate. In terms of biological role, catalyzes the ADP transfer from ATP to D-glycero-beta-D-manno-heptose 1-phosphate, yielding ADP-D-glycero-beta-D-manno-heptose. This chain is Bifunctional protein HldE, found in Yersinia pestis bv. Antiqua (strain Antiqua).